The following is an 828-amino-acid chain: Zinc finger protein 438 (828 aa).

3 disordered regions span residues 1–29, 143–173, and 193–231; these read MQNSVSVPPKDEGESNIPSGTIQSRKGLQ, KSGCSKAPAQTQMCPQMSPSPPHHPELLYKP, and ALTNGSDHGDLRPPVTNTHGSLNPPATPASSTPEEPAKQ. 2 stretches are compositionally biased toward polar residues: residues 16-29 and 150-159; these read NIPSGTIQSRKGLQ and PAQTQMCPQM. 3 consecutive C2H2-type zinc fingers follow at residues 507–529, 535–557, and 567–590; these read HRCHVCNHHFQFKQHLRDHMNTH, YSCRICRKSYVRPGSLSTHMKLH, and MCCEFCAKVFGHIRVYFGHLKEVH. Residues 680–721 are disordered; the sequence is EGTFPGSKGTQEELVQHASPDWKRHPERGKPEKVHSSSEESH. Positions 689–721 are enriched in basic and acidic residues; that stretch reads TQEELVQHASPDWKRHPERGKPEKVHSSSEESH. A C2H2-type 4 zinc finger spans residues 776–799; it reads FNCLLCAEMLGRKEDLLHHWKHQH.

Belongs to the krueppel C2H2-type zinc-finger protein family. In terms of tissue distribution, ubiquitous.

The protein localises to the nucleus. In terms of biological role, isoform 1 acts as a transcriptional repressor. The polypeptide is Zinc finger protein 438 (ZNF438) (Homo sapiens (Human)).